The chain runs to 344 residues: Lysophosphatidic acid receptor 6 (344 aa).

Over 1-19 (MVSVNSSHCFYNDSFKYTL) the chain is Extracellular. A glycan (N-linked (GlcNAc...) asparagine) is linked at N5. The helical transmembrane segment at 20 to 46 (YGCMFSMVFVLGLISNCVAIYIFICVL) threads the bilayer. Over 47 to 55 (KVRNETTTY) the chain is Cytoplasmic. A helical membrane pass occupies residues 56-79 (MINLAMSDLLFVFTLPFRIFYFTT). At 80 to 92 (RNWPFGDLLCKIS) the chain is on the extracellular side. A disulfide bridge connects residues C89 and C168. The chain crosses the membrane as a helical span at residues 93-112 (VMLFYTNMYGSILFLTCISV). Residues 113–133 (DRFLAIVYPFKSKTLRTKRNA) are Cytoplasmic-facing. A helical membrane pass occupies residues 134 to 154 (KIVCTGVWLTVIGGSAPAVFV). Over 155-181 (QSTHSQGNNASEACFENFPEATWKTYL) the chain is Extracellular. The chain crosses the membrane as a helical span at residues 182–209 (SRIVIFIEIVGFFIPLILNVTCSSMVLK). The Cytoplasmic segment spans residues 210–227 (TLTKPVTLSRSKINKTKV). Residues 228-253 (LKMIFVHLIIFCFCFVPYNINLILYS) form a helical membrane-spanning segment. Residues 254–272 (LVRTQTFVNCSVVAAVRTM) lie on the Extracellular side of the membrane. A helical transmembrane segment spans residues 273 to 292 (YPITLCIAVSNCCFDPIVYY). C284 is lipidated: S-palmitoyl cysteine. The Cytoplasmic segment spans residues 293-344 (FTSDTIQNSIKMKNWSVRRSDFRFSEVHGAENFIQHNLQTLKSKIFDNESAA).

It belongs to the G-protein coupled receptor 1 family. As to expression, expressed ubiquitously, including in skin and hair follicle cells. Detected in both Henle's and Huxley's layers of the inner root sheath of the hair follicle and in suprabasal layers of the epidermis (at protein level). Expressed at low levels in peripheral blood leukocytes.

It localises to the cell membrane. In terms of biological role, binds to oleoyl-L-alpha-lysophosphatidic acid (LPA). Intracellular cAMP is involved in the receptor activation. Important for the maintenance of hair growth and texture. The polypeptide is Lysophosphatidic acid receptor 6 (LPAR6) (Homo sapiens (Human)).